The following is a 197-amino-acid chain: Recombination protein RecR (197 aa).

The C4-type zinc finger occupies Cys56–Cys71. Positions Arg79–Pro174 constitute a Toprim domain.

This sequence belongs to the RecR family.

In terms of biological role, may play a role in DNA repair. It seems to be involved in an RecBC-independent recombinational process of DNA repair. It may act with RecF and RecO. In Myxococcus xanthus (strain DK1622), this protein is Recombination protein RecR.